Reading from the N-terminus, the 332-residue chain is Glycerol-3-phosphate dehydrogenase [NAD(P)+] (332 aa).

Positions 11, 12, 32, 33, and 106 each coordinate NADPH. Residues lysine 106 and glycine 136 each coordinate sn-glycerol 3-phosphate. Alanine 140 serves as a coordination point for NADPH. Sn-glycerol 3-phosphate is bound by residues lysine 191, aspartate 244, serine 254, arginine 255, and asparagine 256. The Proton acceptor role is filled by lysine 191. Arginine 255 provides a ligand contact to NADPH. Positions 280 and 282 each coordinate NADPH.

This sequence belongs to the NAD-dependent glycerol-3-phosphate dehydrogenase family.

It is found in the cytoplasm. It carries out the reaction sn-glycerol 3-phosphate + NAD(+) = dihydroxyacetone phosphate + NADH + H(+). The enzyme catalyses sn-glycerol 3-phosphate + NADP(+) = dihydroxyacetone phosphate + NADPH + H(+). It participates in membrane lipid metabolism; glycerophospholipid metabolism. Its function is as follows. Catalyzes the reduction of the glycolytic intermediate dihydroxyacetone phosphate (DHAP) to sn-glycerol 3-phosphate (G3P), the key precursor for phospholipid synthesis. The polypeptide is Glycerol-3-phosphate dehydrogenase [NAD(P)+] (Corynebacterium jeikeium (strain K411)).